The following is an 85-amino-acid chain: Double gene block protein 2 (85 aa).

The Lumenal segment spans residues 1 to 2; it reads MK. Residues 3–23 traverse the membrane as a helical segment; it reads VLLVTGVLGLLLLIKWKSQST. At 24–36 the chain is on the cytoplasmic side; sequence STSNQTCQCPTSP. The chain crosses the membrane as a helical span at residues 37-56; the sequence is WVIYAFYNSLSLVLLLCHLI. Over 57-85 the chain is Lumenal; it reads PEIKPIHTSYNTHDSSKQQHISINTGNGK.

It belongs to the carmovirus double gene block protein 2 family.

It localises to the host endoplasmic reticulum membrane. In terms of biological role, cell-to-cell movement function. The sequence is that of Double gene block protein 2 from Turnip crinkle virus (TCV).